Consider the following 274-residue polypeptide: Probable cyclic nucleotide phosphodiesterase RPA0124 (274 aa).

7 residues coordinate Fe cation: D8, H10, D49, N79, H155, H194, and H196. Residues H10, D49, and 79 to 80 (NH) each bind AMP. An AMP-binding site is contributed by H196.

Belongs to the cyclic nucleotide phosphodiesterase class-III family. The cofactor is Fe(2+).

This Rhodopseudomonas palustris (strain ATCC BAA-98 / CGA009) protein is Probable cyclic nucleotide phosphodiesterase RPA0124.